The following is a 202-amino-acid chain: Urease accessory protein UreF (202 aa).

This sequence belongs to the UreF family. In terms of assembly, ureD, UreF and UreG form a complex that acts as a GTP-hydrolysis-dependent molecular chaperone, activating the urease apoprotein by helping to assemble the nickel containing metallocenter of UreC. The UreE protein probably delivers the nickel.

The protein resides in the cytoplasm. Required for maturation of urease via the functional incorporation of the urease nickel metallocenter. This Sporosarcina pasteurii (Bacillus pasteurii) protein is Urease accessory protein UreF.